Reading from the N-terminus, the 629-residue chain is MQTSVTPDAISTVLSNPSFDSSSDRSEIVVQVVDLKPIGNRYTFSANDGKTKVKAMFTASLTPEIISGKIQNLGLIRLIDFTVNDISSKSTKYFLVTKCEAVGSVLDSEINLDSKSGEEEAREPKKQKLEHSPVSPLNDVVSTGITLKPKQEFVAKSASQIMSEQRGNAAPAARMAMTRRVHPLVSLNPYQGNWTIKVRVTNKGVMRNYKNARGEGCVFNVELTDEEGTQIQATMFNDAARKFFDRFQLGKVYYISRGSLKLANKQFKTVQNDYEMTLNENSEVEEASSEEMFIPETKFNFVPIEELGLYVNQKELIDLIGVVQSVSPTMSIRRRTDNEMIPKRDITLADESRKTVVVSLWNDLATGIGQELLDMADQSPVIAIKSLKVGDFQGVSLSTISRSNVVINPESPEAKKLKSWFDSEGKEISMSSIGSGMSPSAKNGSRSLYTDRVLLSHITSNPSLFEEKPVFFSTRAYISFIKPDQTMWYQACKTCNKKVTEALDSGYWCEGCQRKYEECSLRYIMAVKVTDSSGETWISSFNDEAEKILGCSADELNKLKSEEGEVNEYQTKLKEATWSSHVFRVSVTQNEYNGEKRQRVTVKGVAPLDFAAETRLLLQDISNKNKTSQ.

A disordered region spans residues 112–135 (LDSKSGEEEAREPKKQKLEHSPVS). Residues 115–131 (KSGEEEAREPKKQKLEH) are compositionally biased toward basic and acidic residues. The segment at residues 194-280 (WTIKVRVTNK…QNDYEMTLNE (87 aa)) is a DNA-binding region (OB). Residues 492-512 (CKTCNKKVTEALDSGYWCEGC) form a C4-type zinc finger.

It belongs to the replication factor A protein 1 family. As to quaternary structure, heterotrimer of RPA1, RPA2 and RPA3 (canonical replication protein A complex).

Its subcellular location is the nucleus. Functionally, component of the replication protein A complex (RPA) required for DNA recombination, repair and replication. The activity of RPA is mediated by single-stranded DNA binding and protein interactions. Probably involved in repair of double-strand DNA breaks (DSBs) induced by genotoxic stresses. This is Replication protein A 70 kDa DNA-binding subunit D (RPA1D) from Arabidopsis thaliana (Mouse-ear cress).